We begin with the raw amino-acid sequence, 846 residues long: Structure-specific endonuclease subunit SLX4 (846 aa).

Disordered stretches follow at residues 1–20, 84–111, 123–164, 283–322, 480–513, 624–690, and 723–751; these read MTDHGPDALDAFSPPRVGSA, KAGAENLPVHRTKRRKLGNQRDNTAESM, QPAE…VKKA, RTSKSLDSESLDTGTSSTSEGNGKRKQTKKAKRSAKSKIT, DPTPKITPKPGDERQSNLSNKNTERNIPEESSLL, PPNA…MGSQ, and TLASRSASSHITPQISSAPSQTVPIQTRA. Residues 141–153 are compositionally biased toward basic and acidic residues; it reads KPSEKGQKSEKTA. Residues 293 to 303 show a composition bias toward polar residues; that stretch reads LDTGTSSTSEG. Residues 306–318 are compositionally biased toward basic residues; it reads KRKQTKKAKRSAK. 2 stretches are compositionally biased toward polar residues: residues 657 to 680 and 725 to 751; these read KEITNPARSSWSTAKNLKSSSKPT and ASRSASSHITPQISSAPSQTVPIQTRA.

The protein belongs to the SLX4 family. As to quaternary structure, forms a heterodimer with SLX1. Post-translationally, phosphorylated in response to DNA damage.

The protein resides in the nucleus. Functionally, regulatory subunit of the SLX1-SLX4 structure-specific endonuclease that resolves DNA secondary structures generated during DNA repair and recombination. Has endonuclease activity towards branched DNA substrates, introducing single-strand cuts in duplex DNA close to junctions with ss-DNA. The protein is Structure-specific endonuclease subunit SLX4 of Arthroderma otae (strain ATCC MYA-4605 / CBS 113480) (Microsporum canis).